The following is a 194-amino-acid chain: MFNFKLVLVGPGGVGKSCLTIQFIAQKFVDEYDPTLEDSYRKQTTVDGEECLLDIYDTAGQEDFSAVRDQYMRTGEGFLCVYSITYLQSFKEIHRLHNHLLKVKDLDSVPFVLVGNKCDLNEYREVSTAEGEELAKKLNCKFLETSAKERINVSESFYELVREVKKARQSNQHSNSQEQNTDQPIKKKKSCNLL.

A GTP-binding site is contributed by 10-17; sequence GPGGVGKS. The Effector region motif lies at 32–40; it reads YDPTLEDSY. GTP is bound by residues 57–61 and 116–119; these read DTAGQ and NKCD. The disordered stretch occupies residues 168–194; sequence RQSNQHSNSQEQNTDQPIKKKKSCNLL. Positions 169–180 are enriched in low complexity; the sequence is QSNQHSNSQEQN. A Cysteine methyl ester modification is found at Cys191. A lipid anchor (S-geranylgeranyl cysteine) is attached at Cys191. Residues 192–194 constitute a propeptide, removed in mature form; the sequence is NLL.

Belongs to the small GTPase superfamily. Ras family.

It is found in the cell membrane. The catalysed reaction is GTP + H2O = GDP + phosphate + H(+). In terms of biological role, ras proteins bind GDP/GTP and possess intrinsic GTPase activity. This chain is Ras-like protein rasS (rasS), found in Dictyostelium discoideum (Social amoeba).